The following is a 384-amino-acid chain: GTPase Obg (384 aa).

The Obg domain occupies 1-159; the sequence is MKFIDEAKIE…RSLQLELKVL (159 aa). Disordered regions lie at residues 20 to 46 and 129 to 149; these read ATSFRREKFVPRGGPDGGDGGKGGSVW and HFKSSVNRAPKQSTPGEEGET. A compositionally biased stretch (gly residues) spans 33–43; the sequence is GPDGGDGGKGG. Residues 130-143 show a composition bias toward polar residues; sequence FKSSVNRAPKQSTP. The 189-residue stretch at 160-348 folds into the OBG-type G domain; that stretch reads ADVGLLGMPN…LVHQINQYLA (189 aa). GTP contacts are provided by residues 166-173, 191-195, 213-216, 284-287, and 329-331; these read GMPNAGKS, FTTLH, DIPG, NKLD, and SAL. Residues serine 173 and threonine 193 each coordinate Mg(2+).

The protein belongs to the TRAFAC class OBG-HflX-like GTPase superfamily. OBG GTPase family. In terms of assembly, monomer. It depends on Mg(2+) as a cofactor.

Its subcellular location is the cytoplasm. Its function is as follows. An essential GTPase which binds GTP, GDP and possibly (p)ppGpp with moderate affinity, with high nucleotide exchange rates and a fairly low GTP hydrolysis rate; the half-life of the GTP-bound state is about 50 minutes. Plays a role in control of the cell cycle, stress response, ribosome biogenesis and in those bacteria that undergo differentiation, in morphogenesis control. The protein is GTPase Obg of Neisseria gonorrhoeae (strain ATCC 700825 / FA 1090).